Reading from the N-terminus, the 752-residue chain is MNINPYFLFIDVPIQAAISTTFPYTGVPPYSHGTGTGYTIDTVIRTHEYSNKGKQYISDVTGCVMVDPTNGPLPEDNEPSAYAQLDCVLEALDRMDEEHPGLFQAGSQNAMEALMVTTVDKLTQGRQTFDWTVCRNQPAATALNTTITSFRLNDLNGADKGGLVPFCQDIIDSLDKPEMIFFTVKNIKKKLPAKNRKGFLIKRIPMKVKDRITRVEYIKRALSLNTMTKDAERGKLKRRAIATAGIQIRGFVLVVENLAKNICENLEQSGLPVGGNEKKAKLSNAVAKMLSNCPPGGISMTVTGDNTKWNECLNPRIFLAMTERITRDSPIWFRDFCSIAPVLFSNKIARLGKGFMITSKTKRLKAQIPCPDLFNIPLERYNEETRAKLKKLKPFFNEEGTASLSPGMMMGMFNMLSTVLGVAALGIKNIGNKEYLWDGLQSSDDFALFVNAKDEETCMEGINDFYRTCKLLGINMSKKKSYCNETGMFEFTSMFYRDGFVSNFAMELPSFGVAGVNESADMAIGMTIIKNNMINNGMGPATAQTAIQLFIADYRYTYKCHRGDSKVEGKRMKIIKELWENTKGRDGLLVADGGPNLYNLRNLHIPEIILKYNIMDPEYKGRLLHPQNPFVGHLSIEGIKEADITPAHGPIKKMDYDAVSGTHSWRTKRNRSILNTDQRNMILEEQCYAKCCNLFEACFNSASYRKPVGQHSMLEAMAHRLRMDARLDYESGRMSKEDFEKAMAHLGEIGYM.

2 short sequence motifs (nuclear localization signal) span residues 187-195 (IKKKLPAKN) and 203-216 (RIPM…TRVE). The segment at 249–256 (RGFVLVVE) is promoter-binding site. One can recognise a RdRp catalytic domain in the interval 286-482 (VAKMLSNCPP…GINMSKKKSY (197 aa)).

Belongs to the influenza viruses polymerase PB1 family. As to quaternary structure, influenza RNA polymerase is composed of three subunits: PB1, PB2 and PA. Interacts (via N-terminus) with PA (via C-terminus). Interacts (via C-terminus) with PB2 (via N-terminus); this interaction is essential for transcription initiation. Post-translationally, phosphorylated by host PRKCA.

It is found in the host nucleus. Its subcellular location is the host cytoplasm. It carries out the reaction RNA(n) + a ribonucleoside 5'-triphosphate = RNA(n+1) + diphosphate. Its function is as follows. RNA-dependent RNA polymerase which is responsible for replication and transcription of virus RNA segments. The transcription of viral mRNAs occurs by a unique mechanism called cap-snatching. 5' methylated caps of cellular mRNAs are cleaved after 10-13 nucleotides by PA. In turn, these short capped RNAs are used as primers by PB1 for transcription of viral mRNAs. During virus replication, PB1 initiates RNA synthesis and copy vRNA into complementary RNA (cRNA) which in turn serves as a template for the production of more vRNAs. In Homo sapiens (Human), this protein is RNA-directed RNA polymerase catalytic subunit.